Here is a 139-residue protein sequence, read N- to C-terminus: Putative nickel-responsive regulator (139 aa).

Histidine 79, histidine 90, histidine 92, and cysteine 98 together coordinate Ni(2+).

This sequence belongs to the transcriptional regulatory CopG/NikR family. Requires Ni(2+) as cofactor.

Functionally, transcriptional regulator. The sequence is that of Putative nickel-responsive regulator from Anaeromyxobacter dehalogenans (strain 2CP-C).